The chain runs to 256 residues: Peptidyl-prolyl cis-trans isomerase FKBP19, chloroplastic (256 aa).

The N-terminal 29 residues, 1-29 (MASISSFGCFPQSTALAGTSSTTRCRTTV), are a transit peptide targeting the chloroplast. The transit peptide at 30–88 (AARLADQSDDFAPLRSSGGNCGCVNNSGEFDRRKLLVSSVGLLIGALSYDSKDGDFASA) directs the protein to the thylakoid. Residues 135–254 (GDKVVVDWDG…LFDVELLKIV (120 aa)) form the PPIase FKBP-type domain. Ser-164 bears the Phosphoserine mark.

The protein belongs to the FKBP-type PPIase family.

The protein resides in the plastid. It is found in the chloroplast thylakoid lumen. It carries out the reaction [protein]-peptidylproline (omega=180) = [protein]-peptidylproline (omega=0). Functionally, PPIases accelerate the folding of proteins. It catalyzes the cis-trans isomerization of proline imidic peptide bonds in oligopeptides. The chain is Peptidyl-prolyl cis-trans isomerase FKBP19, chloroplastic (FKBP19) from Arabidopsis thaliana (Mouse-ear cress).